A 392-amino-acid chain; its full sequence is Na(+)/H(+) antiporter NhaA 2 (392 aa).

11 consecutive transmembrane segments (helical) span residues 20–40, 63–83, 99–119, 127–147, 158–178, 181–201, 209–229, 265–285, 298–318, 336–356, and 365–385; these read FFAA…AALI, VEHW…GLEI, ALPG…YVAF, IGGW…VLSL, IFLS…IALF, SDLS…LVAL, LLPY…SGIH, VAFA…LSGI, VALG…ALAI, GVAA…ALAF, and EVKV…VVVL.

Belongs to the NhaA Na(+)/H(+) (TC 2.A.33) antiporter family.

It localises to the cell inner membrane. The enzyme catalyses Na(+)(in) + 2 H(+)(out) = Na(+)(out) + 2 H(+)(in). Its function is as follows. Na(+)/H(+) antiporter that extrudes sodium in exchange for external protons. In Pseudomonas savastanoi pv. phaseolicola (strain 1448A / Race 6) (Pseudomonas syringae pv. phaseolicola (strain 1448A / Race 6)), this protein is Na(+)/H(+) antiporter NhaA 2.